We begin with the raw amino-acid sequence, 963 residues long: Importin-13 (963 aa).

HEAT repeat units follow at residues 24–54, 56–88, 95–135, 142–179, 194–231, 236–268, 276–325, 330–372, 375–438, 440–476, 487–522, 524–558, 562–600, 603–648, 676–716, 720–754, 761–803, 815–845, 860–893, and 897–931; these read ENVE…QAQA, PQAW…KISR, TDQY…LSMM, AVAD…EFQT, LAVE…SWVQ, LQDC…NAIS, VNTL…ALLD, WQSF…DDIL, EAEK…YEML, AELL…FQSI, VVPG…WLAD, PVMI…CREC, LPPY…LLSA, VEEI…SNLF, PVVV…VKTL, FAPM…VHIF, FPPI…ALKR, VKAV…TELL, EDGR…FALN, and FSLL…QQIL. The 67-residue stretch at 45 to 111 folds into the Importin N-terminal domain; the sequence is AQKWLMQAQA…KAQLFTQITR (67 aa).

It belongs to the importin beta family. Interacts with UBC9, RAN, RBM8A, eIF-1A and PAX6.

It localises to the cytoplasm. It is found in the nucleus. Functionally, functions in nuclear protein import as nuclear transport receptor. Serves as receptor for nuclear localization signals (NLS) in cargo substrates. Is thought to mediate docking of the importin/substrate complex to the nuclear pore complex (NPC) through binding to nucleoporin and the complex is subsequently translocated through the pore by an energy requiring, Ran-dependent mechanism. At the nucleoplasmic side of the NPC, Ran binds to the importin, the importin/substrate complex dissociates and importin is re-exported from the nucleus to the cytoplasm where GTP hydrolysis releases Ran. The directionality of nuclear import is thought to be conferred by an asymmetric distribution of the GTP- and GDP-bound forms of Ran between the cytoplasm and nucleus. Mediates the nuclear import of UBC9, the RBM8A/MAGOH complex, PAX6 and probably other members of the paired homeobox family. Also mediates nuclear export of eIF-1A, and the cytoplasmic release of eIF-1A is triggered by the loading of import substrates onto IPO13. The sequence is that of Importin-13 (IPO13) from Bos taurus (Bovine).